The following is a 445-amino-acid chain: Phosphoglucosamine mutase (445 aa).

S102 acts as the Phosphoserine intermediate in catalysis. Mg(2+)-binding residues include S102, D241, D243, and D245. S102 is subject to Phosphoserine.

This sequence belongs to the phosphohexose mutase family. It depends on Mg(2+) as a cofactor. Post-translationally, activated by phosphorylation.

It catalyses the reaction alpha-D-glucosamine 1-phosphate = D-glucosamine 6-phosphate. Catalyzes the conversion of glucosamine-6-phosphate to glucosamine-1-phosphate. In Escherichia coli O127:H6 (strain E2348/69 / EPEC), this protein is Phosphoglucosamine mutase.